The chain runs to 701 residues: Glycine--tRNA ligase beta subunit (701 aa).

Belongs to the class-II aminoacyl-tRNA synthetase family. Tetramer of two alpha and two beta subunits.

It localises to the cytoplasm. It carries out the reaction tRNA(Gly) + glycine + ATP = glycyl-tRNA(Gly) + AMP + diphosphate. The protein is Glycine--tRNA ligase beta subunit of Anaeromyxobacter sp. (strain K).